Here is a 284-residue protein sequence, read N- to C-terminus: 2-dehydro-3-deoxyphosphooctonate aldolase (284 aa).

This sequence belongs to the KdsA family.

The protein resides in the cytoplasm. The enzyme catalyses D-arabinose 5-phosphate + phosphoenolpyruvate + H2O = 3-deoxy-alpha-D-manno-2-octulosonate-8-phosphate + phosphate. Its pathway is carbohydrate biosynthesis; 3-deoxy-D-manno-octulosonate biosynthesis; 3-deoxy-D-manno-octulosonate from D-ribulose 5-phosphate: step 2/3. The protein operates within bacterial outer membrane biogenesis; lipopolysaccharide biosynthesis. In Klebsiella pneumoniae subsp. pneumoniae (strain ATCC 700721 / MGH 78578), this protein is 2-dehydro-3-deoxyphosphooctonate aldolase.